The following is a 395-amino-acid chain: MTVPDTRKGLMIVNMGPHHPSMHGVLRLIVTLEGEDVIDCEPILGYLHRGMEKIAENRTIIQYLPYVTRWDYLATMFTEAITVNAPEQLGNVQVPQRASYIRVIMLELSRIASHLLWLGPFMADIGAQTPFFYIFRERELLYDLFEASTGMRMMHNYFRIGGVAADLPHGWIDKCLDFCDYFLTRVAEYEKLITRNPIFLDRVEGVGIIGGEEAINWGLSGPMLRASGIPWDLRKVDHYECYNEFDWEVQWQKEGDSLARYLVRIGEMTESIKIIQQAIEGIPGGPYENLEVRRFDFDGATNSEWNDLEYGFISKKPSPNFELSKQELYMRVEAPKGELGIYMIGDNSVFPWRWKIRPPGFINLQILPQLVKRMKLADIMTILGSIDIIMGEVDR.

The protein belongs to the complex I 49 kDa subunit family. In terms of assembly, NDH is composed of at least 16 different subunits, 5 of which are encoded in the nucleus.

It localises to the plastid. The protein localises to the chloroplast thylakoid membrane. The catalysed reaction is a plastoquinone + NADH + (n+1) H(+)(in) = a plastoquinol + NAD(+) + n H(+)(out). It catalyses the reaction a plastoquinone + NADPH + (n+1) H(+)(in) = a plastoquinol + NADP(+) + n H(+)(out). NDH shuttles electrons from NAD(P)H:plastoquinone, via FMN and iron-sulfur (Fe-S) centers, to quinones in the photosynthetic chain and possibly in a chloroplast respiratory chain. The immediate electron acceptor for the enzyme in this species is believed to be plastoquinone. Couples the redox reaction to proton translocation, and thus conserves the redox energy in a proton gradient. The chain is NAD(P)H-quinone oxidoreductase subunit H, chloroplastic from Dioscorea elephantipes (Elephant's foot yam).